The chain runs to 570 residues: Urease subunit alpha (570 aa).

Residues 135 to 570 (GGLDIHVHFN…ELPLAQRYHL (436 aa)) enclose the Urease domain. Ni(2+)-binding residues include H140, H142, and K219. An N6-carboxylysine modification is found at K219. H221 provides a ligand contact to substrate. H248 and H274 together coordinate Ni(2+). Catalysis depends on H322, which acts as the Proton donor. D362 is a binding site for Ni(2+).

The protein belongs to the metallo-dependent hydrolases superfamily. Urease alpha subunit family. As to quaternary structure, heterotrimer of UreA (gamma), UreB (beta) and UreC (alpha) subunits. Three heterotrimers associate to form the active enzyme. Requires Ni cation as cofactor. Carboxylation allows a single lysine to coordinate two nickel ions.

Its subcellular location is the cytoplasm. The enzyme catalyses urea + 2 H2O + H(+) = hydrogencarbonate + 2 NH4(+). Its pathway is nitrogen metabolism; urea degradation; CO(2) and NH(3) from urea (urease route): step 1/1. This Natronomonas pharaonis (strain ATCC 35678 / DSM 2160 / CIP 103997 / JCM 8858 / NBRC 14720 / NCIMB 2260 / Gabara) (Halobacterium pharaonis) protein is Urease subunit alpha.